Reading from the N-terminus, the 222-residue chain is Triosephosphate isomerase (222 aa).

9–11 provides a ligand contact to substrate; it reads NYK. His93 (electrophile) is an active-site residue. The active-site Proton acceptor is the Glu141. Residues Ile146, Gly181, and 202–203 each bind substrate; that span reads AS.

The protein belongs to the triosephosphate isomerase family. Homotetramer; dimer of dimers.

It localises to the cytoplasm. The enzyme catalyses D-glyceraldehyde 3-phosphate = dihydroxyacetone phosphate. The protein operates within carbohydrate biosynthesis; gluconeogenesis. Its pathway is carbohydrate degradation; glycolysis; D-glyceraldehyde 3-phosphate from glycerone phosphate: step 1/1. Functionally, involved in the gluconeogenesis. Catalyzes stereospecifically the conversion of dihydroxyacetone phosphate (DHAP) to D-glyceraldehyde-3-phosphate (G3P). The polypeptide is Triosephosphate isomerase (Methanosarcina barkeri (strain Fusaro / DSM 804)).